The primary structure comprises 564 residues: MAAPRPPPAISVSVSAPAFYAPQKKFAPVVAPKPKVNPFRPGDSEPPVAAGAQRAQMGRVGEIPPPPPEDFPLPPPPLIGEGDDSEGALGGAFPPPPPPMIEEPFPPAPLEEDIFPSPPPPLEEEGGPEAPTQLPPQPREKVCSIDLEIDSLSSLLDDMTKNDPFKARVSSGYVPPPVATPFVPKPSTKPAPGGTAPLPPWKTPSSSQPPPQPQAKPQVQLHVQPQAKPHVQPQPVSSANTQPRGPLSQAPTPAPKFAPVAPKFTPVVSKFSPGAPSGPGPQPNQKMVPPDAPSSVSTGSPQPPSFTYAQQKEKPLVQEKQHPQPPPAQNQNQVRSPGGPGPLTLKEVEELEQLTQQLMQDMEHPQRQSVAVNESCGKCNQPLARAQPAVRALGQLFHITCFTCHQCQQQLQGQQFYSLEGAPYCEGCYTDTLEKCNTCGQPITDRMLRATGKAYHPQCFTCVVCACPLEGTSFIVDQANQPHCVPDYHKQYAPRCSVCSEPIMPEPGRDETVRVVALDKNFHMKCYKCEDCGKPLSIEADDNGCFPLDGHVLCRKCHSARAQT.

An N-acetylalanine modification is found at A2. The segment at 30-141 (VAPKPKVNPF…TQLPPQPREK (112 aa)) is disordered. Composition is skewed to pro residues over residues 63–78 (IPPPPPEDFPLPPPPL) and 93–109 (FPPPPPPMIEEPFPPAP). Phosphoserine occurs at positions 117, 144, 170, and 171. Residues 162–344 (NDPFKARVSS…RSPGGPGPLT (183 aa)) are disordered. Pro residues-rich tracts occupy residues 174–189 (VPPPVATPFVPKPSTK) and 197–214 (PLPPWKTPSSSQPPPQPQ). Phosphothreonine is present on T180. The span at 234–243 (QPVSSANTQP) shows a compositional bias: polar residues. R244 is subject to Asymmetric dimethylarginine. Low complexity predominate over residues 255–275 (PKFAPVAPKFTPVVSKFSPGA). 2 positions are modified to N6-acetyllysine: K256 and K263. Residue T265 is modified to Phosphothreonine. K270 carries the N6-acetyllysine modification. 2 positions are modified to phosphoserine: S272 and S300. The span at 294-310 (SSVSTGSPQPPSFTYAQ) shows a compositional bias: polar residues. The segment covering 311 to 322 (QKEKPLVQEKQH) has biased composition (basic and acidic residues). S336 is modified (phosphoserine). 3 LIM zinc-binding domains span residues 376 to 435 (CGKC…TLEK), 436 to 495 (CNTC…YAPR), and 496 to 562 (CSVC…SARA).

The protein belongs to the zyxin/ajuba family. In terms of assembly, interacts, via the Pro-rich regions, with the EVH1 domains of ENAH, EVL and VASP. Interacts with the first LIM domain of TES. Interacts with SYNPO2.

Its subcellular location is the cytoplasm. The protein resides in the cytoskeleton. It localises to the cell junction. It is found in the focal adhesion. The protein localises to the nucleus. Functionally, adhesion plaque protein. Binds alpha-actinin and the CRP protein. Important for targeting TES and ENA/VASP family members to focal adhesions and for the formation of actin-rich structures. May be a component of a signal transduction pathway that mediates adhesion-stimulated changes in gene expression. This Mus musculus (Mouse) protein is Zyxin (Zyx).